Here is a 377-residue protein sequence, read N- to C-terminus: Succinyl-diaminopimelate desuccinylase (377 aa).

His67 is a Zn(2+) binding site. The active site involves Asp69. Asp100 is a Zn(2+) binding site. Glu134 functions as the Proton acceptor in the catalytic mechanism. Residues Glu135, Glu163, and His349 each coordinate Zn(2+).

Homodimer. Requires Zn(2+) as cofactor.

It catalyses the reaction N-succinyl-(2S,6S)-2,6-diaminopimelate + H2O = (2S,6S)-2,6-diaminopimelate + succinate. It functions in the pathway amino-acid biosynthesis; L-lysine biosynthesis via DAP pathway; LL-2,6-diaminopimelate from (S)-tetrahydrodipicolinate (succinylase route): step 3/3. Competitively inhibited by L,L-DAP, D,L-DAP, 2-carboxyethylphosphonic acid (CEPA) and 5-mercaptopentanoic acid (MSPA). Succinate is a poor inhibitor. Catalyzes the hydrolysis of N-succinyl-L,L-diaminopimelic acid (SDAP), forming succinate and LL-2,6-diaminopimelate (DAP), an intermediate involved in the bacterial biosynthesis of lysine and meso-diaminopimelic acid, an essential component of bacterial cell walls. It can only hydrolyze L,L-N-succinyl-diaminopimelic acid (L,L-SDAP) and is inactive toward D,L-, L,D-, and D,D-SDAP. This chain is Succinyl-diaminopimelate desuccinylase (dapE), found in Haemophilus influenzae (strain ATCC 51907 / DSM 11121 / KW20 / Rd).